Reading from the N-terminus, the 354-residue chain is F-box/kelch-repeat protein At1g80440 (354 aa).

The F-box domain occupies Glu2 to Ala49. 4 Kelch repeats span residues Arg63–Val110, Asp115–Ser163, Thr166–Gly213, and Phe215–Cys263.

The protein is F-box/kelch-repeat protein At1g80440 of Arabidopsis thaliana (Mouse-ear cress).